Consider the following 194-residue polypeptide: Thymidine kinase (194 aa).

Residues 15–22 (GPMFSGKS) and 89–92 (DEAH) contribute to the ATP site. E90 (proton acceptor) is an active-site residue. C146, C149, C178, and C181 together coordinate Zn(2+).

The protein belongs to the thymidine kinase family. In terms of assembly, homotetramer.

It localises to the cytoplasm. It catalyses the reaction thymidine + ATP = dTMP + ADP + H(+). This Metamycoplasma arthritidis (strain 158L3-1) (Mycoplasma arthritidis) protein is Thymidine kinase.